The primary structure comprises 144 residues: Large ribosomal subunit protein uL15 (144 aa).

The disordered stretch occupies residues 1 to 52 (MIKLESLQDPSPRKRRKKLLGRGPGSGHGKTSGRGHKGDGSRSGYKRRFGYE). The segment covering 22 to 32 (RGPGSGHGKTS) has biased composition (gly residues).

It belongs to the universal ribosomal protein uL15 family. As to quaternary structure, part of the 50S ribosomal subunit.

In terms of biological role, binds to the 23S rRNA. The polypeptide is Large ribosomal subunit protein uL15 (Chlamydia felis (strain Fe/C-56) (Chlamydophila felis)).